A 465-amino-acid polypeptide reads, in one-letter code: Ras-like GTPase YcjX (465 aa).

The Walker A motif signature appears at 26-33 (GLSRSGKT). GTP is bound by residues Ser-28, Gly-31, Lys-32, Thr-33, Ala-34, Trp-95, Thr-99, and Arg-100. GDP-binding residues include Gly-31, Lys-32, Thr-33, Ala-34, Trp-95, and Thr-99. At Lys-249 the chain carries N6-acetyllysine. GTP-binding residues include Lys-338, Asp-340, His-341, and Val-380. Residues Lys-338, Asp-340, His-341, and Val-380 each contribute to the GDP site.

The protein to H.influenzae HI_1637. In terms of assembly, monomer in solution. The cofactor is Mg(2+).

The catalysed reaction is GTP + H2O = GDP + phosphate + H(+). With respect to regulation, alternates between an inactive form bound to GDP and an active form bound to GTP. Likely activated by a guanine nucleotide-exchange factor (GEF). In terms of biological role, binds GTP and GDP. Has intrinsic GTPase activity. Does not hydrolyze ATP. May act as a transducer of stress responses. This chain is Ras-like GTPase YcjX (ycjX), found in Escherichia coli (strain K12).